The chain runs to 635 residues: Thrombopoietin receptor (635 aa).

Residues 1–25 (MPSWALFMVTSCLLLAPQNLAQVSS) form the signal peptide. Over 26-491 (QDVSLLASDS…RVETATETAW (466 aa)) the chain is Extracellular. Cystine bridges form between cysteine 40–cysteine 50 and cysteine 77–cysteine 93. N-linked (GlcNAc...) asparagine glycans are attached at residues asparagine 117 and asparagine 178. The 110-residue stretch at 172-281 (GPRDPKNSTG…WSLPVTVDLP (110 aa)) folds into the Fibronectin type-III 1 domain. Intrachain disulfides connect cysteine 193/cysteine 323, cysteine 194/cysteine 241, cysteine 291/cysteine 301, and cysteine 334/cysteine 352. Residues 205–232 (ALDQSPCAQPTMPWQDGPKQTSPSREAS) are disordered. Asparagine 298 carries N-linked (GlcNAc...) asparagine glycosylation. Residue asparagine 358 is glycosylated (N-linked (GlcNAc...) asparagine). Residues 392-486 (PTPNLHWREI…WSDPTRVETA (95 aa)) form the Fibronectin type-III 2 domain. The WSXWS motif motif lies at 474-478 (WSSWS). Residues 492 to 513 (ISLVTALHLVLGLSAVLGLLLL) traverse the membrane as a helical segment. At 514–635 (RWQFPAHYRR…YLPLSYWQQP (122 aa)) the chain is on the cytoplasmic side. A Box 1 motif motif is present at residues 528–536 (LWPSLPDLH). Glycyl lysine isopeptide (Lys-Gly) (interchain with G-Cter in ubiquitin) cross-links involve residues lysine 553 and lysine 573. Phosphotyrosine is present on residues tyrosine 591, tyrosine 626, and tyrosine 631.

Belongs to the type I cytokine receptor family. Type 1 subfamily. As to quaternary structure, homodimer. Interacts with ATXN2L. Interacts with JAK2 and TYK2; these interactions increase MPL localization to the cell membrane. Interacts with THPO. Interacts with SHIP/INPP5D. Interacts with BTK. Interacts with SYK; this interaction negatively regulates THPO-mediated ERK1/2 signaling. Post-translationally, phosphorylated at Tyr-591 in response to THPO stimulation. In terms of processing, ubiquitination at Lys-553 and Lys-573 targets MPL for degradation by both the lysosomal and proteasomal pathways. The E3 ubiquitin-protein ligase CBL significantly contributes to this ubiquitination. As to expression, expressed at a low level in a large number of cells of hematopoietic origin. Isoform 1 and isoform 2 are always found to be coexpressed.

It localises to the cell membrane. The protein localises to the golgi apparatus. Its subcellular location is the cell surface. In terms of biological role, receptor for thrombopoietin that regulates hematopoietic stem cell renewal, megakaryocyte differentiation, and platelet formation. Upon activation by THPO, induces rapid tyrosine phosphorylation and activation of JAK2, providing docking sites for many signaling proteins such as STAT5, SHIP/INPP5D, GRB2, SOS1 and PI3K. In turn, These signaling cascades lead to the proliferation, survival, and differentiation of megakaryocytes, ultimately leading to increased platelet production. In Homo sapiens (Human), this protein is Thrombopoietin receptor (MPL).